The sequence spans 93 residues: Large ribosomal subunit protein bL31B (93 aa).

It belongs to the bacterial ribosomal protein bL31 family. Type B subfamily. As to quaternary structure, part of the 50S ribosomal subunit.

The polypeptide is Large ribosomal subunit protein bL31B (Pseudomonas syringae pv. tomato (strain ATCC BAA-871 / DC3000)).